A 447-amino-acid chain; its full sequence is Signal recognition particle 54 kDa protein (447 aa).

GTP is bound by residues 103–110 (GVQGSGKT), 185–189 (DTAGR), and 245–248 (TKMD).

Belongs to the GTP-binding SRP family. SRP54 subfamily. In terms of assembly, part of the signal recognition particle protein translocation system, which is composed of SRP and FtsY. Archaeal SRP consists of a 7S RNA molecule of 300 nucleotides and two protein subunits: SRP54 and SRP19.

The protein resides in the cytoplasm. The enzyme catalyses GTP + H2O = GDP + phosphate + H(+). Its function is as follows. Involved in targeting and insertion of nascent membrane proteins into the cytoplasmic membrane. Binds to the hydrophobic signal sequence of the ribosome-nascent chain (RNC) as it emerges from the ribosomes. The SRP-RNC complex is then targeted to the cytoplasmic membrane where it interacts with the SRP receptor FtsY. The polypeptide is Signal recognition particle 54 kDa protein (Saccharolobus solfataricus (strain ATCC 35092 / DSM 1617 / JCM 11322 / P2) (Sulfolobus solfataricus)).